A 208-amino-acid chain; its full sequence is Hemocyanin, units E and F (208 aa).

Residue H1 coordinates Cu cation. Positions H1–L74 are unit E. The cysteines at positions 7 and 18 are disulfide-linked. The 2'-(S-cysteinyl)-histidine (Cys-His) cross-link spans C19 to H21. N43 carries an N-linked (GlcNAc...) asparagine glycan. The unit F stretch occupies residues V75–T208. H113 is a Cu cation binding site. Residues C119 and C130 are joined by a disulfide bond. The segment at residues C131–H133 is a cross-link (2'-(S-cysteinyl)-histidine (Cys-His)). The Cu cation site is built by H133 and H142.

It belongs to the tyrosinase family. Hemocyanin subfamily. In terms of assembly, decamers of large identical subunits (390 kDa), each containing 8 globular oxygen-binding functional units. Cu(2+) is required as a cofactor.

Hemocyanins are copper-containing oxygen carriers occurring freely dissolved in the hemolymph of many mollusks and arthropods. This chain is Hemocyanin, units E and F, found in Sepia officinalis (Common cuttlefish).